The primary structure comprises 710 residues: MLNPIVQKFQYGQHTVTLETGMMARQATAAVMVSMDDTAVFVTVVGQKKAKPGQGFFPLTVNYQERTYAAGRIPGSFFRREGRPSEGETLTSRLIDRPIRPLFPEGFVNEVQVIATVVSVNPQVNPDIVAMIGASAALALSGLPFNGPIGAARVGYLNDQYVLNPTSDELKESKLDLVVAGTKGAVLMVESEAELLSEDQMLGAVVFGHDQQQIVIDNINALVAEAGKPRWDWQPEAVNEALRSRITALAESRLSDAYRITEKQERYAQVDVIKSETSAALLAEDEALDAAEISDLLHALEKDVVRSRILRGEPRIDGREKDMIRGLDVRTGVLPRTHGSALFTRGETQALVTATLGTARDAQNLDELMGERTDNFLFHYNFPPYSVGETGMVGSPKRREIGHGRLAKRGVLAVMPKGDAFPYTVRVVSEITESNGSSSMASVCGASLALMDAGVPIKAAVAGIAMGLVKDENNFVVLSDILGDEDHLGDMDFKVAGSREGITALQMDIKIEGITREIMQVALNQAKGARLHILGVMEQAISGPRGDISQFAPRIHTIKISVDKIKDVIGKGGSVIRALTEETGTTIEIEDDGTVKIAATDGDKAKFAIRRIEEITAEIEVGRIYNGKVTRIVDFGAFVAIGGGKEGLVHISQIADKRVEKVTDYLQMGQEVPVKVLEVDRQGRVRLSIKEAGEQAQPEAEAVPAAPEAE.

Mg(2+) contacts are provided by aspartate 486 and aspartate 492. A KH domain is found at 553–612; the sequence is PRIHTIKISVDKIKDVIGKGGSVIRALTEETGTTIEIEDDGTVKIAATDGDKAKFAIRRI. The region spanning 622–690 is the S1 motif domain; the sequence is GRIYNGKVTR…RQGRVRLSIK (69 aa). The disordered stretch occupies residues 690–710; it reads KEAGEQAQPEAEAVPAAPEAE. Residues 694-710 show a composition bias toward low complexity; it reads EQAQPEAEAVPAAPEAE.

This sequence belongs to the polyribonucleotide nucleotidyltransferase family. Component of the RNA degradosome, which is a multiprotein complex involved in RNA processing and mRNA degradation. Requires Mg(2+) as cofactor.

Its subcellular location is the cytoplasm. It catalyses the reaction RNA(n+1) + phosphate = RNA(n) + a ribonucleoside 5'-diphosphate. Involved in mRNA degradation. Catalyzes the phosphorolysis of single-stranded polyribonucleotides processively in the 3'- to 5'-direction. This is Polyribonucleotide nucleotidyltransferase from Erwinia tasmaniensis (strain DSM 17950 / CFBP 7177 / CIP 109463 / NCPPB 4357 / Et1/99).